The primary structure comprises 218 residues: MPQAPQLHDGRRIWDISPAVSPATPVWPGDTPFQHDPAWQLDEHCPVNVGRITMSPHTGAHADAPLHYAADGAPIGAVPLDAYLGPCRVIHCIGAAPRVEPQHIAHALAGTPPRVLLRTYAQAPQGKWDSAFCAVAPETISLLARHGVRLIGIDTPSLDPETSKTMDAHHAVRDHQLAILEGIVLDEVPAGDYELIALPLRLATLDASPVRAVLRELP.

Trp27 lines the substrate pocket. Zn(2+)-binding residues include His57, His61, and Asp63. The active-site Proton donor/acceptor is the His67. Positions 169 and 181 each coordinate Zn(2+).

Belongs to the Cyclase 1 superfamily. KynB family. Homodimer. Zn(2+) is required as a cofactor.

The catalysed reaction is N-formyl-L-kynurenine + H2O = L-kynurenine + formate + H(+). Its pathway is amino-acid degradation; L-tryptophan degradation via kynurenine pathway; L-kynurenine from L-tryptophan: step 2/2. Inhibited by EDTA. Insensitive to phenylmethylsulfonyl fluoride (PMSF). Catalyzes the hydrolysis of N-formyl-L-kynurenine to L-kynurenine, the second step in the kynurenine pathway of tryptophan degradation. The chain is Kynurenine formamidase from Cupriavidus metallidurans (strain ATCC 43123 / DSM 2839 / NBRC 102507 / CH34) (Ralstonia metallidurans).